Reading from the N-terminus, the 328-residue chain is MITVVGGTFSKLHKGHKALLNTAIDTGNEVVIGLTSDEYVKKNKVYPAIPYSVRYRTLYNYMIKRTNKFRIRQIDDRNGNAPYEKDYEVIVVSPETYPRSLKINEIRISNGLPPLKIIRVPYVLAQDLFPISSTRIINGEIDTNGKRITPLKVGISTRNEAKIQAVEKFVRRLVKNYQIVKNENYNLKTQQPFGEETMELATQRAMEALKDNDYSVGIESGIIYESFSKKYYDVHYCVVIDRFGNVTRGMSSGFEIPDHIVDRMKRDRTFSEAYSGYLNVQEIDQSEGIIGKISEGKLRRIDLIEESIRNAFILRLDPDFYDSTYTPP.

Residues 1-152 (MITVVGGTFS…TNGKRITPLK (152 aa)) are phosphopantetheine adenylyltransferase. The inosine/xanthosine triphosphatase stretch occupies residues 153–328 (VGISTRNEAK…DFYDSTYTPP (176 aa)).

The protein in the N-terminal section; belongs to the eukaryotic CoaD family. It in the C-terminal section; belongs to the YjjX NTPase family. Mg(2+) serves as cofactor. It depends on Mn(2+) as a cofactor.

It is found in the cytoplasm. It catalyses the reaction (R)-4'-phosphopantetheine + ATP + H(+) = 3'-dephospho-CoA + diphosphate. The enzyme catalyses XTP + H2O = XDP + phosphate + H(+). It carries out the reaction ITP + H2O = IDP + phosphate + H(+). It participates in cofactor biosynthesis; coenzyme A biosynthesis. In terms of biological role, reversibly transfers an adenylyl group from ATP to 4'-phosphopantetheine, yielding dephospho-CoA (dPCoA) and pyrophosphate. Functionally, phosphatase that hydrolyzes non-canonical purine nucleotides such as XTP and ITP to their respective diphosphate derivatives. Probably excludes non-canonical purines from DNA/RNA precursor pool, thus preventing their incorporation into DNA/RNA and avoiding chromosomal lesions. The protein is Bifunctional phosphopantetheine adenylyltransferase/NTP phosphatase (coaD) of Thermoplasma acidophilum (strain ATCC 25905 / DSM 1728 / JCM 9062 / NBRC 15155 / AMRC-C165).